The sequence spans 438 residues: Cytochrome P450 monooxygenase claJ (438 aa).

Cys-378 provides a ligand contact to heme.

It belongs to the cytochrome P450 family. Heme serves as cofactor.

It functions in the pathway secondary metabolite biosynthesis. In terms of biological role, cytochrome P450 monooxygenase; part of the cla gene cluster that produces clavatol and ortho-quinone methide. The clavatol biosynthesis cluster cla and the terrestric acid cluster tra are both involved in the production of peniphenones and penilactones. The non-reducing PKS claF is responsible for the formation of clavatol from successive condensations of 3 malonyl-CoA units, presumably with a simple acetyl-CoA starter unit, and 2 methylation steps. The esterase claE probably collaborates with claF by catalyzing the hydrolysis of ACP-bound acyl intermediates to free the ACP from stalled intermediates. The clavatol oxidase claD then converts clavatol to hydroxyclavatol. Spontaneous dehydration of hydroxyclavatol leads to the accumulation of the highly active ortho-quinone methide. On the other hand, the PKS-NRPS hybrid traA is involved in the formation of crustosic acid, with the help of traB and traD. The polyketide synthase module (PKS) of traA is responsible for the synthesis of the polyketide backbone via the condensation of an acetyl-CoA starter unit with 3 malonyl-CoA units. The downstream nonribosomal peptide synthetase (NRPS) module then amidates the carboxyl end of the polyketide with L-malic acid. Because traA lacks a designated enoylreductase (ER) domain, the required activity is provided the enoyl reductase traG. Crustosic acid undergoes decarboxylation and isomerization to the terrestric acid, catalyzed by the 2-oxoglutarate-dependent dioxygenase traH. Both acids are further converted to the 2 gamma-butyrolactones (R)-5-methyltetronic acid and (S)-5-carboxylmethyltetronic acid, with involvement of the cytochrome P450 monooxygenase claJ. Spontaneous addition of the methide to these gamma-butyrolactones leads to peniphenone D and penilactone D, which undergo again stereospecific attacking by methide to give penilactones A and B. This chain is Cytochrome P450 monooxygenase claJ, found in Penicillium crustosum (Blue mold fungus).